Consider the following 507-residue polypeptide: uncharacterized protein (507 aa).

A run of 12 helical transmembrane segments spans residues 46 to 66 (WIVLLAVALLNNTNTMSWIGY), 83 to 103 (AWLSMVYMMCTIPVGMFAMWA), 112 to 132 (AVLIAGWANGIGAVIRVISSL), 141 to 161 (FPICMTGQGIAAIAYPFIMFL), 181 to 201 (IGVMSNPLGVLMANLISPAIV), 207 to 227 (VIWLNIFTCVPSLIAMLIATF), 263 to 283 (IILLIVMGGGIGMFNCLYTVM), 299 to 319 (VCAALMIVGGVFGAAASSIFV), 328 to 348 (TLKIALGAAVIFGLIFLQLTL), 354 to 374 (VILGVTCLLFGVLGLATYPIG), 389 to 409 (TSTGLIVLSGQIQSVIYVFIM), and 442 to 462 (MSIMIFSLLATLLVLTLVVLF). Residues 477-493 (ATADKAKELSNQNKDRI) show a composition bias toward basic and acidic residues. Residues 477-507 (ATADKAKELSNQNKDRITLQAESAVEPLQKK) form a disordered region.

Its subcellular location is the membrane. This is an uncharacterized protein from Caenorhabditis elegans.